The primary structure comprises 197 residues: Potassium-transporting ATPase KdpC subunit (197 aa).

The helical transmembrane segment at 9–29 (LVVTLLLAALLCGAYPVLVTG) threads the bilayer.

It belongs to the KdpC family. In terms of assembly, the system is composed of three essential subunits: KdpA, KdpB and KdpC.

It is found in the cell inner membrane. In terms of biological role, part of the high-affinity ATP-driven potassium transport (or Kdp) system, which catalyzes the hydrolysis of ATP coupled with the electrogenic transport of potassium into the cytoplasm. This subunit acts as a catalytic chaperone that increases the ATP-binding affinity of the ATP-hydrolyzing subunit KdpB by the formation of a transient KdpB/KdpC/ATP ternary complex. The sequence is that of Potassium-transporting ATPase KdpC subunit from Nitratidesulfovibrio vulgaris (strain DSM 19637 / Miyazaki F) (Desulfovibrio vulgaris).